The sequence spans 548 residues: Glucose-6-phosphate isomerase (548 aa).

Glu355 serves as the catalytic Proton donor. Residues His386 and Lys514 contribute to the active site.

It belongs to the GPI family.

The protein resides in the cytoplasm. The catalysed reaction is alpha-D-glucose 6-phosphate = beta-D-fructose 6-phosphate. It functions in the pathway carbohydrate biosynthesis; gluconeogenesis. It participates in carbohydrate degradation; glycolysis; D-glyceraldehyde 3-phosphate and glycerone phosphate from D-glucose: step 2/4. Its function is as follows. Catalyzes the reversible isomerization of glucose-6-phosphate to fructose-6-phosphate. In Yersinia enterocolitica serotype O:8 / biotype 1B (strain NCTC 13174 / 8081), this protein is Glucose-6-phosphate isomerase.